We begin with the raw amino-acid sequence, 140 residues long: Putative transcription elongation factor S-II-like protein 349L (140 aa).

The TFIIS-type zinc-finger motif lies at 100 to 139 (GAIKCKCGSERVFSFSKQTRSGDESTSVFALCSSCKSKWV). Cys-104, Cys-106, Cys-131, and Cys-134 together coordinate Zn(2+).

It belongs to the IIV-6 349L family.

In Acheta domesticus (House cricket), this protein is Putative transcription elongation factor S-II-like protein 349L.